Here is a 598-residue protein sequence, read N- to C-terminus: Polypeptide N-acetylgalactosaminyltransferase 17 (598 aa).

Residues 1–6 (MASLRR) are Cytoplasmic-facing. Residues 7 to 27 (VKVLLVLNLIAVAGFVLFLAK) form a helical; Signal-anchor for type II membrane protein membrane-spanning segment. Topologically, residues 28 to 598 (CRPIAVRSGD…QRWTIKNSIK (571 aa)) are lumenal. The N-linked (GlcNAc...) asparagine glycan is linked to Asn-50. 2 cysteine pairs are disulfide-bonded: Cys-142/Cys-373 and Cys-364/Cys-443. The interval 151–262 (LPQISIIFIF…AGWAEPVLSR (112 aa)) is catalytic subdomain A. Asp-192 and Arg-223 together coordinate substrate. Asp-246, His-248, and His-378 together coordinate Mn(2+). A catalytic subdomain B region spans residues 319–381 (PIRTPAMIGC…PCSRVAHIER (63 aa)). The substrate site is built by Arg-381 and Tyr-386. Asn-461 and Asn-486 each carry an N-linked (GlcNAc...) asparagine glycan. Positions 465–594 (AYGELRNNKA…SCTGQRWTIK (130 aa)) constitute a Ricin B-type lectin domain. 3 cysteine pairs are disulfide-bonded: Cys-478–Cys-494, Cys-526–Cys-541, and Cys-568–Cys-586.

This sequence belongs to the glycosyltransferase 2 family. GalNAc-T subfamily. It depends on Mn(2+) as a cofactor. Highly expressed in brain and heart. Weakly expressed in kidney, liver, lung and spleen.

It is found in the golgi apparatus membrane. It carries out the reaction L-seryl-[protein] + UDP-N-acetyl-alpha-D-galactosamine = a 3-O-[N-acetyl-alpha-D-galactosaminyl]-L-seryl-[protein] + UDP + H(+). It catalyses the reaction L-threonyl-[protein] + UDP-N-acetyl-alpha-D-galactosamine = a 3-O-[N-acetyl-alpha-D-galactosaminyl]-L-threonyl-[protein] + UDP + H(+). Its pathway is protein modification; protein glycosylation. In terms of biological role, may catalyze the initial reaction in O-linked oligosaccharide biosynthesis, the transfer of an N-acetyl-D-galactosamine residue to a serine or threonine residue on the protein receptor. In Homo sapiens (Human), this protein is Polypeptide N-acetylgalactosaminyltransferase 17.